The chain runs to 130 residues: Small ribosomal subunit protein uS9 (130 aa).

It belongs to the universal ribosomal protein uS9 family.

This is Small ribosomal subunit protein uS9 from Burkholderia mallei (strain NCTC 10247).